The primary structure comprises 234 residues: tRNA (guanine-N(1)-)-methyltransferase (234 aa).

S-adenosyl-L-methionine-binding positions include Gly112 and 132-137; that span reads IGDFIL.

Belongs to the RNA methyltransferase TrmD family. In terms of assembly, homodimer.

It is found in the cytoplasm. The catalysed reaction is guanosine(37) in tRNA + S-adenosyl-L-methionine = N(1)-methylguanosine(37) in tRNA + S-adenosyl-L-homocysteine + H(+). Specifically methylates guanosine-37 in various tRNAs. In Campylobacter jejuni subsp. jejuni serotype O:6 (strain 81116 / NCTC 11828), this protein is tRNA (guanine-N(1)-)-methyltransferase.